A 468-amino-acid chain; its full sequence is Envelope glycoprotein C (468 aa).

The first 30 residues, 1-30 (MWLPNLVRFVAVAYLICAGAILTYASGASA), serve as a signal peptide directing secretion. Low complexity predominate over residues 31-50 (SSSQSTPATPTHTTPNLTTA). The interval 31–73 (SSSQSTPATPTHTTPNLTTAHGAGSDNTTNANGTESTHSHETT) is disordered. Over 31–431 (SSSQSTPATP…IVEDRPVLTS (401 aa)) the chain is Virion surface. 9 N-linked (GlcNAc...) asparagine; by host glycosylation sites follow: Asn-46, Asn-57, Asn-62, Asn-92, Asn-100, Asn-131, Asn-203, Asn-208, and Asn-269. Cysteines 76 and 93 form a disulfide. Ig-like domains lie at 220-311 (PLLD…DEVS) and 321-416 (PSVF…DTVV). Cystine bridges form between Cys-239–Cys-301, Cys-340–Cys-399, and Cys-344–Cys-373. Residues 432-451 (IIAVTCGAAALALVVLITAV) form a helical membrane-spanning segment. The Cytoplasmic portion of the chain corresponds to 452-468 (CFYCSKPSQAPYKKSDF).

It belongs to the herpesviridae glycoprotein C family. In terms of assembly, interacts with host complement component C3; this interaction inhibits host immune response by disregulating complement cascade.

Its subcellular location is the virion membrane. Functionally, essential for the initial attachment to heparan sulfate moieties of the host cell surface proteoglycans. Also plays a role in host immune evasion by inhibiting the host complement cascade activation. This is Envelope glycoprotein C (gC) from Equus caballus (Horse).